The primary structure comprises 130 residues: Phosphomevalonate dehydratase small subunit (130 aa).

The active-site Proton acceptor is S62.

Belongs to the AcnX type II small subunit family. In terms of assembly, heterodimer composed of a large subunit (PMDh-L) and a small subunit (PMDh-S).

The catalysed reaction is (R)-5-phosphomevalonate = (2E)-3-methyl-5-phosphooxypent-2-enoate + H2O. It functions in the pathway isoprenoid biosynthesis; isopentenyl diphosphate biosynthesis via mevalonate pathway. Functionally, component of a hydro-lyase that catalyzes the dehydration of mevalonate 5-phosphate (MVA5P) to form trans-anhydromevalonate 5-phosphate (tAHMP). Involved in the archaeal mevalonate (MVA) pathway, which provides fundamental precursors for isoprenoid biosynthesis, such as isopentenyl diphosphate (IPP) and dimethylallyl diphosphate (DMAPP). The sequence is that of Phosphomevalonate dehydratase small subunit from Pyrococcus abyssi (strain GE5 / Orsay).